The chain runs to 436 residues: Xylose isomerase (436 aa).

Catalysis depends on residues H100 and D103. Mg(2+) is bound by residues E231, E267, H270, D295, D306, D308, and D338.

This sequence belongs to the xylose isomerase family. Homotetramer. Mg(2+) is required as a cofactor.

It is found in the cytoplasm. The catalysed reaction is alpha-D-xylose = alpha-D-xylulofuranose. The protein is Xylose isomerase of Rhizobium johnstonii (strain DSM 114642 / LMG 32736 / 3841) (Rhizobium leguminosarum bv. viciae).